A 157-amino-acid chain; its full sequence is Mini-ribonuclease 3 (157 aa).

Asp18 is a catalytic residue. The tract at residues 126 to 157 (EEDEGKGKGETAKEEESITDALSPAEQSEIDC) is disordered. Residues 130–141 (GKGKGETAKEEE) show a composition bias toward basic and acidic residues.

Belongs to the MrnC RNase family. In terms of assembly, homodimer. Mg(2+) serves as cofactor.

It is found in the cytoplasm. Functionally, involved in correct processing of both the 5' and 3' ends of 23S rRNA precursor. Processes 30S rRNA precursor transcript even in absence of ribonuclease 3 (Rnc); Rnc processes 30S rRNA into smaller rRNA precursors. The sequence is that of Mini-ribonuclease 3 from Desulfitobacterium hafniense (strain Y51).